The primary structure comprises 247 residues: UPF0259 membrane protein BUAPTUC7_273 (247 aa).

6 helical membrane-spanning segments follow: residues 20–40 (IGAI…IDMF), 85–105 (IMES…LISF), 114–134 (IVSS…LNFL), 137–157 (FIIQ…SIIL), 188–208 (IIGP…MLLA), and 218–238 (LFLI…IYLF).

It belongs to the UPF0259 family.

The protein resides in the cell membrane. In Buchnera aphidicola subsp. Acyrthosiphon pisum (strain Tuc7), this protein is UPF0259 membrane protein BUAPTUC7_273.